We begin with the raw amino-acid sequence, 321 residues long: Phospho-N-acetylmuramoyl-pentapeptide-transferase (321 aa).

The next 10 membrane-spanning stretches (helical) occupy residues 1 to 21 (MIFIYAIIALLITFILVPILI), 50 to 70 (MGGLTFLISIIITSIIAIIFV), 76 to 96 (IILLLFVTIGFGLIGFIDDYI), 112 to 132 (FLAQIIIAVIFFVLSDVFHLV), 140 to 160 (IPFVNFDIPLSFAYVIFIVFW), 176 to 196 (GLATGLSIIGFAMYAVMSYML), 200 to 220 (AIGIFCIIMIFALLGFLPYNL), 225 to 245 (VFMGDTGSLALGGIFATISIM), 250 to 270 (LSLILIGFVFVVETLSVMLQV), and 300 to 320 (VVTVFWTVGLITGLIGLWIGV).

Belongs to the glycosyltransferase 4 family. MraY subfamily. Requires Mg(2+) as cofactor.

It localises to the cell membrane. It catalyses the reaction UDP-N-acetyl-alpha-D-muramoyl-L-alanyl-gamma-D-glutamyl-L-lysyl-D-alanyl-D-alanine + di-trans,octa-cis-undecaprenyl phosphate = Mur2Ac(oyl-L-Ala-gamma-D-Glu-L-Lys-D-Ala-D-Ala)-di-trans,octa-cis-undecaprenyl diphosphate + UMP. It participates in cell wall biogenesis; peptidoglycan biosynthesis. In terms of biological role, catalyzes the initial step of the lipid cycle reactions in the biosynthesis of the cell wall peptidoglycan: transfers peptidoglycan precursor phospho-MurNAc-pentapeptide from UDP-MurNAc-pentapeptide onto the lipid carrier undecaprenyl phosphate, yielding undecaprenyl-pyrophosphoryl-MurNAc-pentapeptide, known as lipid I. The protein is Phospho-N-acetylmuramoyl-pentapeptide-transferase of Staphylococcus epidermidis (strain ATCC 35984 / DSM 28319 / BCRC 17069 / CCUG 31568 / BM 3577 / RP62A).